The chain runs to 105 residues: Heat shock protein HspQ (105 aa).

It belongs to the HspQ family.

The protein localises to the cytoplasm. In terms of biological role, involved in the degradation of certain denaturated proteins, including DnaA, during heat shock stress. The sequence is that of Heat shock protein HspQ from Yersinia enterocolitica serotype O:8 / biotype 1B (strain NCTC 13174 / 8081).